Here is a 237-residue protein sequence, read N- to C-terminus: Ribosomal RNA small subunit methyltransferase G (237 aa).

S-adenosyl-L-methionine is bound by residues Gly78, Phe83, 129-130 (AE), and Arg148. Positions 216-237 (SKKKETPNKYPRKAGTPNKKPL) are disordered.

This sequence belongs to the methyltransferase superfamily. RNA methyltransferase RsmG family.

The protein localises to the cytoplasm. Functionally, specifically methylates the N7 position of a guanine in 16S rRNA. The polypeptide is Ribosomal RNA small subunit methyltransferase G (Streptococcus agalactiae serotype Ia (strain ATCC 27591 / A909 / CDC SS700)).